Consider the following 62-residue polypeptide: Photosystem II reaction center protein Z (62 aa).

2 helical membrane-spanning segments follow: residues 8 to 28 (TLFA…VVFA) and 41 to 61 (LSGL…NSFV).

It belongs to the PsbZ family. In terms of assembly, PSII is composed of 1 copy each of membrane proteins PsbA, PsbB, PsbC, PsbD, PsbE, PsbF, PsbH, PsbI, PsbJ, PsbK, PsbL, PsbM, PsbT, PsbY, PsbZ, Psb30/Ycf12, at least 3 peripheral proteins of the oxygen-evolving complex and a large number of cofactors. It forms dimeric complexes.

It is found in the plastid. Its subcellular location is the chloroplast thylakoid membrane. Its function is as follows. May control the interaction of photosystem II (PSII) cores with the light-harvesting antenna, regulates electron flow through the 2 photosystem reaction centers. PSII is a light-driven water plastoquinone oxidoreductase, using light energy to abstract electrons from H(2)O, generating a proton gradient subsequently used for ATP formation. This chain is Photosystem II reaction center protein Z, found in Stigeoclonium helveticum (Green alga).